A 331-amino-acid chain; its full sequence is UPF0324 membrane protein YdhF (331 aa).

The next 8 helical transmembrane spans lie at 2 to 20 (SILPGFLLSFAIAIVSYLL), 24 to 46 (IFHSLGSATIAILLGIILGNLYF), 82 to 104 (LGFSGVGFILIQMISTIIFVLFM), 114 to 136 (VSALMASGNAVCGSSAIAAVEPV), 148 to 170 (IAMVNLMGTILMLSLPFLGTWMF), 204 to 226 (TLATLFKIMRIIMLVFVVLYFGF), 247 to 269 (SFLPWYVLGFLVLCTLDTLIHFV), and 308 to 330 (LIYGLSTLVFQVVLALILISLLI).

The protein belongs to the UPF0324 family.

The protein resides in the cell membrane. This Lactococcus lactis subsp. lactis (strain IL1403) (Streptococcus lactis) protein is UPF0324 membrane protein YdhF (ydhF).